A 540-amino-acid polypeptide reads, in one-letter code: FAD-binding monooxygenase lolF2 (540 aa).

FAD contacts are provided by residues V43–E46 and D55–F58. Residues A53 to D55, T182 to Q188, and Q205 to S206 contribute to the NADP(+) site.

The protein belongs to the FAD-binding monooxygenase family. FAD serves as cofactor.

The protein operates within alkaloid biosynthesis. In terms of biological role, FAD-binding monooxygenase; part of the gene cluster that mediates the biosynthesis of loline alkaloids, potent insecticidal agents composed of a pyrrolizidine ring system and an uncommon ether bridge linking carbons 2 and 7. Lolines are structurally differentiated by the various modifications of the L-amino group and include norloline, loline, N-methylloline, N-acetylloline, N-acetylnorloline, and N-formylloline. The first committed step is the condensation of O-acetyl-L-homoserine (derived from L-aspartic acid) and L-proline, probably catalyzed by the gamma-type pyridoxal 5'-phosphate(PLP)-dependent enzyme lolC, to give the diamino diacid, NACPP. Ensuing cyclization, decarboxylation, and acetylation steps yield 1-exo-acetamidopyrrolizidine (AcAP). LolO is required for installation of the ether bridge upon the pathway intermediate, 1-exo-acetamidopyrrolizidine (AcAP). In sequential 2-oxoglutarate- and O(2)-consuming steps, lolO removes hydrogens from C2 and C7 of AcAP to form both carbon-oxygen bonds in N-acetylnorloline (NANL), the precursor to all other lolines. The enzymes lolD, lolE, lolF and lolT have also been proposed to be involved in the ether-bridge installation. Further processing of the exocyclic moiety of NANL by fungal N-acetamidase (LolN), methyltransferase (LolM), and cytochrome P450 (LolP) enzymes, with occasional involvement of a plant acetyltransferase, generates the other known lolines. LolN transforms NANL to norlonine which is monomethylated and dimethylated to respectively lonine and N-methyllonine (NML) by lolM. LolP catalyzes hydroxylation of the methyl group in N-methylloline (NML) and further oxygenation to N-formylloline (NFL). A plant acetyltransferase is responsible for the acetylation of loline to form N-acetylloline (NAL). LolA might interact with aspartate kinase to prevent feedback inhibition of its activity by these end products and thereby promote production of l-homoserine from l-aspartate. This Epichloe uncinata (Endophyte fungus) protein is FAD-binding monooxygenase lolF2.